Here is a 170-residue protein sequence, read N- to C-terminus: Photosystem I assembly protein Ycf3 (170 aa).

TPR repeat units follow at residues 35–68 (AFTY…EIDP), 72–105 (SYIL…NPFL), and 120–153 (GEQA…TPGN).

Belongs to the Ycf3 family.

Its subcellular location is the plastid. It localises to the chloroplast thylakoid membrane. In terms of biological role, essential for the assembly of the photosystem I (PSI) complex. May act as a chaperone-like factor to guide the assembly of the PSI subunits. In Agrostis stolonifera (Creeping bentgrass), this protein is Photosystem I assembly protein Ycf3.